The chain runs to 66 residues: Large ribosomal subunit protein bL35 (66 aa).

Residues 25–45 (QAAGKRHGMSKRPQKMKRNAR) form a disordered region. The span at 28-44 (GKRHGMSKRPQKMKRNA) shows a compositional bias: basic residues.

Belongs to the bacterial ribosomal protein bL35 family.

The sequence is that of Large ribosomal subunit protein bL35 from Rhodospirillum centenum (strain ATCC 51521 / SW).